Here is a 242-residue protein sequence, read N- to C-terminus: Eukaryotic translation initiation factor 4E type 1B (242 aa).

The tract at residues 1 to 42 (MLAVEVSEAEGGIREWEEEEKEEEAAERTPTGEKSPNSPRTL) is disordered. Positions 16-25 (WEEEEKEEEA) are enriched in acidic residues. A compositionally biased stretch (polar residues) spans 32-41 (GEKSPNSPRT). The interval 62–65 (HPLQ) is EIF4EBP1/2/3 binding. 81–82 (WQ) provides a ligand contact to mRNA. An EIF4EBP1/2/3 binding region spans residues 98-102 (WALYS). Position 127–128 (127–128 (WE)) interacts with mRNA. The interval 157–164 (ETLLCLIG) is EIF4EBP1/2/3 binding. MRNA contacts are provided by residues 182–187 (RTKGDK) and 230–232 (TKS).

This sequence belongs to the eukaryotic initiation factor 4E family. As to quaternary structure, eIF4F is a multi-subunit complex, the composition of which varies with external and internal environmental conditions. It is composed of at least EIF4A, EIF4E and EIF4G.

Its function is as follows. Recognizes and binds the 7-methylguanosine-containing mRNA cap during an early step in the initiation of protein synthesis and facilitates ribosome binding by inducing the unwinding of the mRNAs secondary structure. In Homo sapiens (Human), this protein is Eukaryotic translation initiation factor 4E type 1B (EIF4E1B).